An 818-amino-acid polypeptide reads, in one-letter code: Mediator of RNA polymerase II transcription subunit 16 (818 aa).

3 WD repeats span residues 86–125 (SSKS…INLW), 296–342 (LDGR…QSVH), and 615–666 (RLPE…PVYT). The interaction with Dif stretch occupies residues 175–524 (TLSGFGGVAS…ANFLALKSNI (350 aa)).

This sequence belongs to the Mediator complex subunit 16 family. Component of the Mediator complex. Interacts with Dif.

It localises to the nucleus. In terms of biological role, component of the Mediator complex, a coactivator involved in the regulated transcription of nearly all RNA polymerase II-dependent genes. Mediator functions as a bridge to convey information from gene-specific regulatory proteins to the basal RNA polymerase II transcription machinery. Mediator is recruited to promoters by direct interactions with regulatory proteins and serves as a scaffold for the assembly of a functional preinitiation complex with RNA polymerase II and the general transcription factors. Required for activated transcription of the MtnA, MtnB and MtnD genes. Required for transcriptional activation in response to lipopolysacchardie (LPS). The polypeptide is Mediator of RNA polymerase II transcription subunit 16 (MED16) (Drosophila melanogaster (Fruit fly)).